Consider the following 196-residue polypeptide: Pro-FMRFamide-related neuropeptide VF (196 aa).

Residues methionine 1–cysteine 26 form the signal peptide. Residues alanine 27–arginine 55 constitute a propeptide that is removed on maturation. The residue at position 92 (phenylalanine 92) is a Phenylalanine amide. 2 consecutive propeptides follow at residues asparagine 95–glutamate 99 and asparagine 115–valine 121. Phenylalanine 131 is modified (phenylalanine amide). A propeptide spanning residues threonine 134–lysine 196 is cleaved from the precursor.

It belongs to the FARP (FMRFamide related peptide) family. In terms of tissue distribution, specifically expressed in the retina. As to expression, detected in the hypothalamus.

The protein localises to the secreted. Efficiently inhibits forskolin-induced production of cAMP. Acts as a potent negative regulator of gonadotropin synthesis and secretion. Induces secretion of prolactin. Functionally, efficiently inhibits forskolin-induced production of cAMP. Blocks morphine-induced analgesia. In terms of biological role, shows no inhibitory activity of forskolin-induced production of cAMP. The chain is Pro-FMRFamide-related neuropeptide VF from Homo sapiens (Human).